A 430-amino-acid polypeptide reads, in one-letter code: MTRSEALFEQAKKTIPGGVNSPVRAFNGVGGSPLFIEKADGAYIYDADGKAYIDYVGSWGPMILGHNHPKIREAVLAAVHNGLSFGAPTELEVQMAEKVIAMVPSIEQVRMVSSGTEATMSAIRLARGFTNRDKILKFEGCYHGHADCLLVKAGSGALTLGQPSSPGIPEDFAKHTLTAVYNDLDSVRTLFEQYPTEIACIIIEPVAGNMNCIPPIPGFLKGLRTMCDEFGALLIIDEVMTGFRVSRSGAQGHYGVTPDLTTLGKVIGGGMPVGAFGGRKEVMQFIAPTGPVYQAGTLSGNPIAMSAGLAQMEALCEEGLYEALSAKTKRIAEGFKAAADKHGIPMAINYVGGMFGFFFTEQEQITRFDQVTKCNIEHFRTFYHGMLDEGVYLAPSAYEAGFLSMAHGEEELRLTLEAADRVLARMKAAM.

At K265 the chain carries N6-(pyridoxal phosphate)lysine.

Belongs to the class-III pyridoxal-phosphate-dependent aminotransferase family. HemL subfamily. Homodimer. Requires pyridoxal 5'-phosphate as cofactor.

It is found in the cytoplasm. The catalysed reaction is (S)-4-amino-5-oxopentanoate = 5-aminolevulinate. It participates in porphyrin-containing compound metabolism; protoporphyrin-IX biosynthesis; 5-aminolevulinate from L-glutamyl-tRNA(Glu): step 2/2. The sequence is that of Glutamate-1-semialdehyde 2,1-aminomutase from Shewanella sp. (strain MR-7).